A 121-amino-acid chain; its full sequence is Large ribosomal subunit protein uL18 (121 aa).

The protein belongs to the universal ribosomal protein uL18 family. In terms of assembly, part of the 50S ribosomal subunit; part of the 5S rRNA/L5/L18/L25 subcomplex. Contacts the 5S and 23S rRNAs.

In terms of biological role, this is one of the proteins that bind and probably mediate the attachment of the 5S RNA into the large ribosomal subunit, where it forms part of the central protuberance. The sequence is that of Large ribosomal subunit protein uL18 from Caldanaerobacter subterraneus subsp. tengcongensis (strain DSM 15242 / JCM 11007 / NBRC 100824 / MB4) (Thermoanaerobacter tengcongensis).